The chain runs to 269 residues: Cytochrome c oxidase subunit 3 (269 aa).

The next 7 helical transmembrane spans lie at 21–41 (PWPM…GLTM), 45–65 (IGNM…SVFW), 90–110 (GFLL…WAYF), 138–160 (PLLN…HALI), 167–187 (ALSG…CQYI), 205–225 (FYAG…MLII), and 247–267 (ILYC…FYWW).

This sequence belongs to the cytochrome c oxidase subunit 3 family. Component of the cytochrome c oxidase (complex IV, CIV), a multisubunit enzyme composed of a catalytic core of 3 subunits and several supernumerary subunits. The complex exists as a monomer or a dimer and forms supercomplexes (SCs) in the inner mitochondrial membrane with ubiquinol-cytochrome c oxidoreductase (cytochrome b-c1 complex, complex III, CIII).

Its subcellular location is the mitochondrion inner membrane. The catalysed reaction is 4 Fe(II)-[cytochrome c] + O2 + 8 H(+)(in) = 4 Fe(III)-[cytochrome c] + 2 H2O + 4 H(+)(out). Functionally, component of the cytochrome c oxidase, the last enzyme in the mitochondrial electron transport chain which drives oxidative phosphorylation. The respiratory chain contains 3 multisubunit complexes succinate dehydrogenase (complex II, CII), ubiquinol-cytochrome c oxidoreductase (cytochrome b-c1 complex, complex III, CIII) and cytochrome c oxidase (complex IV, CIV), that cooperate to transfer electrons derived from NADH and succinate to molecular oxygen, creating an electrochemical gradient over the inner membrane that drives transmembrane transport and the ATP synthase. Cytochrome c oxidase is the component of the respiratory chain that catalyzes the reduction of oxygen to water. Electrons originating from reduced cytochrome c in the intermembrane space (IMS) are transferred via the dinuclear copper A center (CU(A)) of subunit 2 and heme A of subunit 1 to the active site in subunit 1, a binuclear center (BNC) formed by heme A3 and copper B (CU(B)). The BNC reduces molecular oxygen to 2 water molecules using 4 electrons from cytochrome c in the IMS and 4 protons from the mitochondrial matrix. The protein is Cytochrome c oxidase subunit 3 (COX3) of Candida glabrata (strain ATCC 2001 / BCRC 20586 / JCM 3761 / NBRC 0622 / NRRL Y-65 / CBS 138) (Yeast).